The primary structure comprises 146 residues: D-aminoacyl-tRNA deacylase (146 aa).

The Gly-cisPro motif, important for rejection of L-amino acids motif lies at 137 to 138 (GP).

Belongs to the DTD family. Homodimer.

It is found in the cytoplasm. The enzyme catalyses glycyl-tRNA(Ala) + H2O = tRNA(Ala) + glycine + H(+). It carries out the reaction a D-aminoacyl-tRNA + H2O = a tRNA + a D-alpha-amino acid + H(+). Functionally, an aminoacyl-tRNA editing enzyme that deacylates mischarged D-aminoacyl-tRNAs. Also deacylates mischarged glycyl-tRNA(Ala), protecting cells against glycine mischarging by AlaRS. Acts via tRNA-based rather than protein-based catalysis; rejects L-amino acids rather than detecting D-amino acids in the active site. By recycling D-aminoacyl-tRNA to D-amino acids and free tRNA molecules, this enzyme counteracts the toxicity associated with the formation of D-aminoacyl-tRNA entities in vivo and helps enforce protein L-homochirality. This is D-aminoacyl-tRNA deacylase from Desulfatibacillum aliphaticivorans.